The sequence spans 139 residues: Large ribosomal subunit protein uL16c (139 aa).

This sequence belongs to the universal ribosomal protein uL16 family. As to quaternary structure, part of the 50S ribosomal subunit.

It is found in the plastid. Its subcellular location is the chloroplast. This is Large ribosomal subunit protein uL16c from Cryptomeria japonica (Japanese cedar).